The following is a 741-amino-acid chain: Methionine--tRNA ligase (741 aa).

A compositionally biased stretch (polar residues) spans 1-22; that stretch reads MTMKQYTMSKMNAETQTQTRES. The tract at residues 1–25 is disordered; sequence MTMKQYTMSKMNAETQTQTRESFPT. A 'HIGH' region motif is present at residues 36-46; it reads PYANGDLHIGH. 4 residues coordinate Zn(2+): Cys167, Cys170, Cys179, and Cys183. The disordered stretch occupies residues 309–329; it reads VRSHSSSSAKDSSEGNSPSNI. Low complexity predominate over residues 311–329; sequence SHSSSSAKDSSEGNSPSNI. Residue Thr381 participates in ATP binding. The interval 591–629 is disordered; it reads KLADRVTDPTDDDDSDTDTETGTDVAETTNESHSESNMT. Residues 599–611 show a composition bias toward acidic residues; it reads PTDDDDSDTDTET. Residues 616 to 629 are compositionally biased toward polar residues; that stretch reads AETTNESHSESNMT. Residues 643 to 741 form the tRNA-binding domain; sequence EFEELDLRVA…EDADPGTSIQ (99 aa).

This sequence belongs to the class-I aminoacyl-tRNA synthetase family. MetG type 1 subfamily. Homodimer. Zn(2+) is required as a cofactor.

It is found in the cytoplasm. The catalysed reaction is tRNA(Met) + L-methionine + ATP = L-methionyl-tRNA(Met) + AMP + diphosphate. Its function is as follows. Is required not only for elongation of protein synthesis but also for the initiation of all mRNA translation through initiator tRNA(fMet) aminoacylation. In Haloquadratum walsbyi (strain DSM 16790 / HBSQ001), this protein is Methionine--tRNA ligase.